The sequence spans 95 residues: MANEKPTEEVKTENNNHINLKVAGQDGSVVQFKIKRQTPLSKLMKAYCEPRGLSVKQIRFRFGGQPISGTDKPAQLEMEDEDTIDVFQQPTGGVY.

The region spanning His17 to Tyr95 is the Ubiquitin-like domain. A Glycyl lysine isopeptide (Gly-Lys) (interchain with K-? in acceptor proteins) cross-link involves residue Gly93. The propeptide occupies Val94–Tyr95.

This sequence belongs to the ubiquitin family. SUMO subfamily. As to quaternary structure, interacts with SAE2. Covalently attached to a number of proteins. In contrast to SUMO1, SUMO2 and SUMO3, seems to be insensitive to sentrin-specific proteases due to the presence of Pro-90. This may impair processing to mature form and conjugation to substrates. In terms of tissue distribution, expressed mainly in adult and embryonic kidney. Expressed at various levels in immune tissues, with the highest expression in the lymph node and spleen.

Ubiquitin-like protein which can be covalently attached to target lysines as a monomer. Does not seem to be involved in protein degradation and may modulate protein subcellular localization, stability or activity. Upon oxidative stress, conjugates to various anti-oxidant enzymes, chaperones, and stress defense proteins. May also conjugate to NFKBIA, TFAP2A and FOS, negatively regulating their transcriptional activity, and to NR3C1, positively regulating its transcriptional activity. Covalent attachment to its substrates requires prior activation by the E1 complex SAE1-SAE2 and linkage to the E2 enzyme UBE2I. The protein is Small ubiquitin-related modifier 4 (SUMO4) of Homo sapiens (Human).